We begin with the raw amino-acid sequence, 713 residues long: Ribosomal RNA large subunit methyltransferase K/L (713 aa).

The region spanning 46–157 is the THUMP domain; that stretch reads TAYRICLWSR…RDQATLSLDL (112 aa).

It belongs to the methyltransferase superfamily. RlmKL family.

It localises to the cytoplasm. It catalyses the reaction guanosine(2445) in 23S rRNA + S-adenosyl-L-methionine = N(2)-methylguanosine(2445) in 23S rRNA + S-adenosyl-L-homocysteine + H(+). It carries out the reaction guanosine(2069) in 23S rRNA + S-adenosyl-L-methionine = N(2)-methylguanosine(2069) in 23S rRNA + S-adenosyl-L-homocysteine + H(+). Its function is as follows. Specifically methylates the guanine in position 2445 (m2G2445) and the guanine in position 2069 (m7G2069) of 23S rRNA. This Syntrophotalea carbinolica (strain DSM 2380 / NBRC 103641 / GraBd1) (Pelobacter carbinolicus) protein is Ribosomal RNA large subunit methyltransferase K/L.